Reading from the N-terminus, the 560-residue chain is Dimethylaniline monooxygenase [N-oxide-forming] 4 (560 aa).

FAD contacts are provided by residues Gly9–Ser13, Glu32, and Leu40–Trp41. NADP(+) contacts are provided by residues Thr60–Asn61 and Thr195–Asp198. A helical membrane pass occupies residues Ala519–Val539.

Belongs to the FMO family. The cofactor is FAD. As to expression, detected in liver and kidney (at protein level).

It is found in the microsome membrane. Its subcellular location is the endoplasmic reticulum membrane. It carries out the reaction N,N-dimethylaniline + NADPH + O2 + H(+) = N,N-dimethylaniline N-oxide + NADP(+) + H2O. Its function is as follows. This protein is involved in the oxidative metabolism of a variety of xenobiotics such as drugs and pesticides. The chain is Dimethylaniline monooxygenase [N-oxide-forming] 4 (Fmo4) from Rattus norvegicus (Rat).